Here is an 84-residue protein sequence, read N- to C-terminus: uncharacterized protein (84 aa).

2 helical membrane passes run 27-47 (INHH…LAML) and 52-72 (IGHV…FVLI).

To M.tuberculosis Rv2876.

Its subcellular location is the cell membrane. This is an uncharacterized protein from Mycobacterium leprae (strain TN).